Consider the following 272-residue polypeptide: Protein alcS (272 aa).

Over residues 1–14 the composition is skewed to polar residues; that stretch reads MDTEQGLKNHTAKT. Positions 1-21 are disordered; sequence MDTEQGLKNHTAKTSPHDETA. The next 6 membrane-spanning stretches (helical) occupy residues 63–83, 91–111, 122–144, 164–184, 192–212, and 225–245; these read PLALGGFVITTTPLSCCLMGW, IAFTGPIIFLGGGLLVLTSIL, VVFGTIGAFWFAFGCTMTPAFNA, FLNTYAFLFIWMGVLMLIFLA, VYVAIFTTLTLVFGFLSGAYW, and LVVAAGACLFVASMLGFYLLV.

Belongs to the acetate uptake transporter (AceTr) (TC 2.A.96) family.

It is found in the cell membrane. It localises to the cell septum. This chain is Protein alcS, found in Aspergillus fumigatus (strain CBS 144.89 / FGSC A1163 / CEA10) (Neosartorya fumigata).